The following is a 260-amino-acid chain: Emerin (260 aa).

Position 1 is an N-acetylmethionine (Met1). Positions 1–45 constitute an LEM domain; that stretch reads MDDYAVLSDTELAAVLRQYNIPHGPILGSTRKLYEKKIFEYETQR. Ser8 and Ser29 each carry phosphoserine. Positions 46–224 are interaction with F-actin; it reads RRLSPPSSSS…PTAALGQDRQ (179 aa). At Ser49 the chain carries Phosphoserine; by PKA. Ser54, Ser69, Ser72, Ser88, Ser99, Ser142, Ser143, and Ser144 each carry phosphoserine. At Tyr162 the chain carries Phosphotyrosine. Residues 169-188 form an interaction with CTNNB1 region; the sequence is RPISNVSRSSLGLSYYPRSS. Ser172, Ser175, and Ser177 each carry phosphoserine. The disordered stretch occupies residues 184–206; the sequence is YPRSSTSSVSSSSSSPSSWLTRR. A compositionally biased stretch (low complexity) spans 187 to 201; sequence SSTSSVSSSSSSPSS. The chain crosses the membrane as a helical span at residues 225–245; sequence VPLWGQLLLFLAFATFLLFVY.

In terms of assembly, interacts with lamins A and C, BANF1, GMCL, BCLAF1 and YTHDC1/YT521. Interacts with TMEM43; the interaction retains emerin in the inner nuclear membrane. Interacts with ACTB, SPTAN1, F-actin, CTNNB1 and beta-tubulin. Interacts with SUN1 and SUN2. Interacts with TMEM201. Interacts with NEMP1.

It localises to the nucleus inner membrane. Its subcellular location is the nucleus outer membrane. Stabilizes and promotes the formation of a nuclear actin cortical network. Stimulates actin polymerization in vitro by binding and stabilizing the pointed end of growing filaments. Inhibits beta-catenin activity by preventing its accumulation in the nucleus. Acts by influencing the nuclear accumulation of beta-catenin through a CRM1-dependent export pathway. Links centrosomes to the nuclear envelope via a microtubule association. Required for proper localization of non-farnesylated prelamin-A/C. Together with NEMP1, contributes to nuclear envelope stiffness in germ cells. The protein is Emerin (Emd) of Rattus norvegicus (Rat).